Reading from the N-terminus, the 984-residue chain is Detocs histidine-protein kinase DtcA (984 aa).

Phosphohistidine; by autocatalysis is present on His-645.

In terms of processing, autophosphorylated.

The catalysed reaction is ATP + protein L-histidine = ADP + protein N-phospho-L-histidine.. Functionally, sensor-kinase member of the two-component regulatory system Detocs that confers resistance to bacteriophage. When the system (DtcA-DtcB-DtcC) is expressed in a susceptible E.coli (strain MG1655) it confers resistance to bacteriophages T2, T4, T5, T6 and SECphi27. Detocs inhibits T5 infection leading to growth arrest but not complete cell lysis, during SECphi27 infection leads to cell lysis. DtcA (this subunit) probably autophosphorylates upon sensing viral infection, and subsequently transfers the phosphate signal to DtcC which activates it, leading to an antiviral defense; DtcB may scavenge phosphorylation signals from accidental activation of DtcA. The chain is Detocs histidine-protein kinase DtcA from Vibrio alginolyticus.